The primary structure comprises 434 residues: ATP-sensitive inward rectifier potassium channel 14 (434 aa).

At 1 to 81 the chain is on the cytoplasmic side; sequence MGLARALRRL…LSDLFTTCVD (81 aa). Residue Cys-79 is modified to S-nitrosocysteine. A helical transmembrane segment spans residues 82–108; sequence VRWRWMCLLFSCSFLASWLLFGLTFWL. At 109 to 131 the chain is on the extracellular side; that stretch reads IASLHGDLAAPPPPAPCFSQVAS. Positions 132 to 148 form an intramembrane region, helical; Pore-forming; sequence FLAAFLFALETQTSIGY. The short motif at 145–150 is the Selectivity filter element; it reads SIGYGV. The Extracellular portion of the chain corresponds to 149–157; it reads GVRSVTEEC. The chain crosses the membrane as a helical span at residues 158–185; it reads PAAVAAVVLQCIAGCVLDAFVVGAVMAK. At 186–434 the chain is on the cytoplasmic side; sequence MAKPKKRNET…TPTLALTLPP (249 aa). The segment at 398 to 434 is disordered; it reads QEEDEEEDTKEGTSAETPDRAASPQALTPTLALTLPP. Over residues 407–416 the composition is skewed to basic and acidic residues; sequence KEGTSAETPD. The segment covering 418-434 has biased composition (low complexity); it reads AASPQALTPTLALTLPP.

This sequence belongs to the inward rectifier-type potassium channel (TC 1.A.2.1) family. KCNJ14 subfamily. Expressed predominantly in motoneurons of cranial nerve motor nuclei within the general somatic and special visceral motor cell column.

The protein localises to the membrane. The enzyme catalyses K(+)(in) = K(+)(out). With respect to regulation, channel activity is regulated by variations of cytosolic pH; channels are activated by alkaline and inhibited by acidic pH values. Inhibited by Ba(2+) and Cs(+) in a voltage-dependent manner; sensitivity to those inhibitors is lower than in other Kir channels. Inward rectifier potassium channels are characterized by a greater tendency to allow potassium to flow into the cell rather than out of it. Their voltage dependence is regulated by the concentration of extracellular potassium; as external potassium is raised, the voltage range of the channel opening shifts to more positive voltages. This chain is ATP-sensitive inward rectifier potassium channel 14 (Kcnj14), found in Rattus norvegicus (Rat).